A 311-amino-acid polypeptide reads, in one-letter code: Protein translocase subunit SecF (311 aa).

6 helical membrane-spanning segments follow: residues 19 to 39, 142 to 162, 166 to 186, 192 to 212, 245 to 265, and 272 to 292; these read AIYA…TQGL, MLAM…RFEL, LGAV…FSVL, LVVV…TIVV, ITSL…GAVI, and LLFG…PLVL.

It belongs to the SecD/SecF family. SecF subfamily. As to quaternary structure, forms a complex with SecD. Part of the essential Sec protein translocation apparatus which comprises SecA, SecYEG and auxiliary proteins SecDF-YajC and YidC.

Its subcellular location is the cell inner membrane. In terms of biological role, part of the Sec protein translocase complex. Interacts with the SecYEG preprotein conducting channel. SecDF uses the proton motive force (PMF) to complete protein translocation after the ATP-dependent function of SecA. The protein is Protein translocase subunit SecF of Magnetococcus marinus (strain ATCC BAA-1437 / JCM 17883 / MC-1).